The sequence spans 453 residues: tRNA modification GTPase MnmE (453 aa).

3 residues coordinate (6S)-5-formyl-5,6,7,8-tetrahydrofolate: Arg-22, Glu-79, and Lys-119. Residues 215 to 376 (GMKVVIAGRP…LKLHLKSLMG (162 aa)) form the TrmE-type G domain. Residue Asn-225 participates in K(+) binding. Residues 225–230 (NAGKSS), 244–250 (TEIAGTT), 269–272 (DTAG), and 334–337 (NKAD) each bind GTP. Residue Ser-229 coordinates Mg(2+). K(+) is bound by residues Thr-244, Ile-246, and Thr-249. Thr-250 provides a ligand contact to Mg(2+). A (6S)-5-formyl-5,6,7,8-tetrahydrofolate-binding site is contributed by Lys-453.

The protein belongs to the TRAFAC class TrmE-Era-EngA-EngB-Septin-like GTPase superfamily. TrmE GTPase family. As to quaternary structure, homodimer. Heterotetramer of two MnmE and two MnmG subunits. K(+) is required as a cofactor.

Its subcellular location is the cytoplasm. In terms of biological role, exhibits a very high intrinsic GTPase hydrolysis rate. Involved in the addition of a carboxymethylaminomethyl (cmnm) group at the wobble position (U34) of certain tRNAs, forming tRNA-cmnm(5)s(2)U34. This chain is tRNA modification GTPase MnmE, found in Shewanella sp. (strain W3-18-1).